The following is a 246-amino-acid chain: Small ribosomal subunit protein uS2 (246 aa).

It belongs to the universal ribosomal protein uS2 family.

In Dictyoglomus thermophilum (strain ATCC 35947 / DSM 3960 / H-6-12), this protein is Small ribosomal subunit protein uS2.